We begin with the raw amino-acid sequence, 202 residues long: NADH-quinone oxidoreductase subunit C (202 aa).

It belongs to the complex I 30 kDa subunit family. As to quaternary structure, NDH-1 is composed of 14 different subunits. Subunits NuoB, C, D, E, F, and G constitute the peripheral sector of the complex.

The protein localises to the cell inner membrane. The enzyme catalyses a quinone + NADH + 5 H(+)(in) = a quinol + NAD(+) + 4 H(+)(out). Functionally, NDH-1 shuttles electrons from NADH, via FMN and iron-sulfur (Fe-S) centers, to quinones in the respiratory chain. The immediate electron acceptor for the enzyme in this species is believed to be ubiquinone. Couples the redox reaction to proton translocation (for every two electrons transferred, four hydrogen ions are translocated across the cytoplasmic membrane), and thus conserves the redox energy in a proton gradient. The polypeptide is NADH-quinone oxidoreductase subunit C (Acidithiobacillus ferrooxidans (strain ATCC 23270 / DSM 14882 / CIP 104768 / NCIMB 8455) (Ferrobacillus ferrooxidans (strain ATCC 23270))).